The chain runs to 348 residues: MKIIQEIPERNIIKLIPENLDDLWHLSNIIQPYNAIYAVTERRTEDKGDKLRADRGTKRRVFLGIKAEKINFHEDFNRLRVSGKIIHAPDDIPIGSYHTIDIEPLLQVSVQKNWKKWDLARLKDAEDSSKKPKVVVVIMDDSEADIFLVREFGIKELASIKSGISKKLDYKQNEQAKFSYYSDIINSISEYEGKILFAGPGFGKNNIQNYISEKHKDLAPNVVIESANHTGKSGLSEILKSGIIDKIYGEARISKETQIIEKLLEEISKKGLAAYGIESVSNAMNYSAIDTLLLTDEYLRRNRRTIEELMNNVENINGNILIISTEHDAGKQLKALGGISALLRFPIE.

Belongs to the eukaryotic release factor 1 family. Pelota subfamily. In terms of assembly, monomer. Requires a divalent metal cation as cofactor.

The protein localises to the cytoplasm. May function in recognizing stalled ribosomes, interact with stem-loop structures in stalled mRNA molecules, and effect endonucleolytic cleavage of the mRNA. May play a role in the release non-functional ribosomes and degradation of damaged mRNAs. Has endoribonuclease activity. The polypeptide is Protein pelota homolog (Methanococcus maripaludis (strain C6 / ATCC BAA-1332)).